The chain runs to 148 residues: Putative nickel-responsive regulator (148 aa).

Ni(2+) is bound by residues His88, His99, His101, and Cys107.

The protein belongs to the transcriptional regulatory CopG/NikR family. Ni(2+) is required as a cofactor.

Transcriptional regulator. In Helicobacter pylori (strain HPAG1), this protein is Putative nickel-responsive regulator.